We begin with the raw amino-acid sequence, 72 residues long: Phosphonoacetate hydrolase (72 aa).

In terms of assembly, monomer. Requires Unlike bacterial phosphonoacetate hydrolase, does not require zinc as a cofactor. as cofactor.

The catalysed reaction is phosphonoacetate + H2O = acetate + phosphate + H(+). Unaffected by EDTA or Ca(2+), Co(2+), Cu(2+), Mg(2+), Mn(2+), Ni(2+) and Zn(2+). This chain is Phosphonoacetate hydrolase, found in Penicillium oxalicum.